Reading from the N-terminus, the 1076-residue chain is Probable cellulose synthase A catalytic subunit 1 [UDP-forming] (1076 aa).

Residues 1 to 267 (MAANAGMVAG…SRIVPIPSNQ (267 aa)) are Cytoplasmic-facing. Zn(2+) contacts are provided by Cys41, Cys44, Cys60, Cys63, Cys68, Cys71, Cys83, and Cys86. The RING-type; degenerate zinc finger occupies 41–87 (CQICGDTVGVSATGDVFVACNECAFPVCRPCYEYERKEGNQCCPQCK). Positions 119 to 179 (HGNGKGPEWQ…HSIRSGTSSY (61 aa)) are disordered. A helical transmembrane segment spans residues 268–288 (LNLYRIVIILRLIILMFFFQY). The Extracellular segment spans residues 289 to 296 (RVTHPVRD). The chain crosses the membrane as a helical span at residues 297 to 317 (AYGLWLVSVICEIWFALSWLL). Over 318-851 (DQFPKWYPIN…LLERLAYINT (534 aa)) the chain is Cytoplasmic. Residues Ser356, Lys362, Glu363, and Asp392 each coordinate UDP-alpha-D-glucose. Residue Asp392 is part of the active site. Residues 446 to 473 (VKERRAMKREYEEFKVRINALVAKAQKV) adopt a coiled-coil conformation. Residue Lys533 coordinates UDP-alpha-D-glucose. Mn(2+) contacts are provided by Lys534 and Asp558. Residue Asp775 is part of the active site. Residues 852-872 (IVYPITSIPLIAYCVLPAICL) traverse the membrane as a helical segment. Over 873–884 (LTNKFIIPEISN) the chain is Extracellular. The chain crosses the membrane as a helical span at residues 885–905 (YAGMFFILLFASIFATGILEL). The Cytoplasmic segment spans residues 906–920 (RWSGVGIEDWWRNEQ). A helical membrane pass occupies residues 921-941 (FWVIGGTSAHLFAVFQGLLKV). Residues 942–971 (LAGIDTNFTVTSKASDEDGDFAELYVFKWT) lie on the Extracellular side of the membrane. Asn948 carries N-linked (GlcNAc...) asparagine glycosylation. Residues 972 to 992 (SLLIPPTTVLVINLVGMVAGI) traverse the membrane as a helical segment. Residues 993 to 1003 (SYAINSGYQSW) lie on the Cytoplasmic side of the membrane. The helical transmembrane segment at 1004–1024 (GPLFGKLFFSIWVILHLYPFL) threads the bilayer. The Extracellular portion of the chain corresponds to 1025 to 1033 (KGLMGRQNR). Residues 1034 to 1054 (TPTIVIVWSILLASIFSLLWV) form a helical membrane-spanning segment. The Cytoplasmic segment spans residues 1055–1076 (KIDPFISPTQKAVALGQCGVNC).

The protein belongs to the glycosyltransferase 2 family. Plant cellulose synthase subfamily. It depends on Zn(2+) as a cofactor. Mn(2+) serves as cofactor.

The protein localises to the cell membrane. The catalysed reaction is [(1-&gt;4)-beta-D-glucosyl](n) + UDP-alpha-D-glucose = [(1-&gt;4)-beta-D-glucosyl](n+1) + UDP + H(+). Its pathway is glycan metabolism; plant cellulose biosynthesis. Catalytic subunit of cellulose synthase terminal complexes ('rosettes'), required for beta-1,4-glucan microfibril crystallization, a major mechanism of the cell wall formation. The sequence is that of Probable cellulose synthase A catalytic subunit 1 [UDP-forming] (CESA1) from Oryza sativa subsp. indica (Rice).